The chain runs to 717 residues: Probable cyclic nucleotide-gated ion channel 5 (717 aa).

The Cytoplasmic segment spans residues 1-102 (MAGKRENFVR…DKFLLYCNKL (102 aa)). A helical transmembrane segment spans residues 103-123 (FVASCILSVFVDPFFFYLPVI). Topologically, residues 124-136 (NAESKCLGIDRKL) are extracellular. A helical transmembrane segment spans residues 137–157 (AITASTLRTFIDVFYLAHMAL). At 158–190 (QLRTAYIAPSSRVFGRGELVIDPAQIAKRYLQR) the chain is on the cytoplasmic side. The helical transmembrane segment at 191-211 (WFIIDFLSVLPLPQIVVWRFL) threads the bilayer. Topologically, residues 212–224 (QSSNGSDVLATKQ) are extracellular. The helical transmembrane segment at 225–245 (ALLFIVLVQYIPRFLRVLPLT) threads the bilayer. The Cytoplasmic portion of the chain corresponds to 246–265 (SELKRTAGVFAETAWAGAAY). The chain crosses the membrane as a helical span at residues 266-286 (YLLLYMLASHIVGAFWYLLAL). The Extracellular portion of the chain corresponds to 287–391 (ERNDACWQEA…GQGLETSTYP (105 aa)). A helical membrane pass occupies residues 392-412 (MEIIFSISLAISGLILFALLI). Residues 413–717 (GNMQTYLQSL…KPPEPDFTAD (305 aa)) lie on the Cytoplasmic side of the membrane. A nucleoside 3',5'-cyclic phosphate is bound by residues 498–628 (LFKS…TFRF) and Glu-569. Residues 614 to 629 (FRRLHSRQVQHTFRFY) are calmodulin-binding. In terms of domain architecture, IQ spans 634–663 (RTWAACFIQAAWRRYCKRKKMEEAEAEAAA).

The protein belongs to the cyclic nucleotide-gated cation channel (TC 1.A.1.5) family. Homotetramer or heterotetramer.

Its subcellular location is the cell membrane. Its function is as follows. Probable cyclic nucleotide-gated ion channel. The chain is Probable cyclic nucleotide-gated ion channel 5 (CNGC5) from Arabidopsis thaliana (Mouse-ear cress).